A 254-amino-acid chain; its full sequence is Urease accessory protein UreD (254 aa).

The protein belongs to the UreD family. As to quaternary structure, ureD, UreF and UreG form a complex that acts as a GTP-hydrolysis-dependent molecular chaperone, activating the urease apoprotein by helping to assemble the nickel containing metallocenter of UreC. The UreE protein probably delivers the nickel.

It localises to the cytoplasm. Functionally, required for maturation of urease via the functional incorporation of the urease nickel metallocenter. The polypeptide is Urease accessory protein UreD (Streptomyces coelicolor (strain ATCC BAA-471 / A3(2) / M145)).